We begin with the raw amino-acid sequence, 436 residues long: Citrate synthase (436 aa).

Residues His-311 and Asp-370 contribute to the active site.

Belongs to the citrate synthase family. As to quaternary structure, homohexamer.

It carries out the reaction oxaloacetate + acetyl-CoA + H2O = citrate + CoA + H(+). It participates in carbohydrate metabolism; tricarboxylic acid cycle; isocitrate from oxaloacetate: step 1/2. Allosterically inhibited by NADH. In Rickettsia prowazekii (strain Madrid E), this protein is Citrate synthase (gltA).